The primary structure comprises 406 residues: Aminomethyltransferase, mitochondrial (406 aa).

A mitochondrion-targeting transit peptide spans 1 to 29 (MRGGLWQLGQSITRRLAQADKKTIGRRCF). Residues E234, R265, and Y403 each coordinate substrate.

The protein belongs to the GcvT family. In terms of assembly, the glycine cleavage system is composed of four proteins: P, T, L and H.

It localises to the mitochondrion. It catalyses the reaction N(6)-[(R)-S(8)-aminomethyldihydrolipoyl]-L-lysyl-[protein] + (6S)-5,6,7,8-tetrahydrofolate = N(6)-[(R)-dihydrolipoyl]-L-lysyl-[protein] + (6R)-5,10-methylene-5,6,7,8-tetrahydrofolate + NH4(+). Its function is as follows. The glycine cleavage system catalyzes the degradation of glycine. This chain is Aminomethyltransferase, mitochondrial (GDCST), found in Solanum tuberosum (Potato).